Here is a 462-residue protein sequence, read N- to C-terminus: Acetyl-CoA decarbonylase/synthase complex subunit gamma (462 aa).

Positions 1-60 (MAQLSAMDVYNLLPKANCGACGCKTCMEFATKLVNREAKPEDCPKLDDESLEKLQELLAP) constitute a 4Fe-4S domain. Residues Cys18, Cys21, Cys26, and Cys43 each contribute to the [4Fe-4S] cluster site.

Heterodimer of delta and gamma chains. The ACDS complex is made up of alpha, epsilon, beta, gamma and delta chains with a probable stoichiometry of (alpha(2)epsilon(2))(4)-beta(8)-(gamma(1)delta(1))(8). The cofactor is corrinoid. It depends on [4Fe-4S] cluster as a cofactor.

It catalyses the reaction 5,6,7,8-tetrahydrosarcinapterin + methyl-Co(III)-[corrinoid Fe-S protein] = 5-methyltetrahydrosarcinapterin + Co(I)-[corrinoid Fe-S protein] + H(+). Functionally, part of a complex that catalyzes the reversible cleavage of acetyl-CoA, allowing autotrophic growth from CO(2). This chain is Acetyl-CoA decarbonylase/synthase complex subunit gamma, found in Methanopyrus kandleri (strain AV19 / DSM 6324 / JCM 9639 / NBRC 100938).